The primary structure comprises 200 residues: Cysteine dioxygenase type 1 (200 aa).

The Fe cation site is built by histidine 86, histidine 88, and histidine 140. The 3'-(S-cysteinyl)-tyrosine (Cys-Tyr) cross-link spans 93-157 (CFLKLLQGNL…TEPAVSLHLY (65 aa)).

Belongs to the cysteine dioxygenase family. In terms of assembly, monomer. Requires Fe(2+) as cofactor. Ni(2+) serves as cofactor. Zn(2+) is required as a cofactor. In terms of processing, the thioether cross-link between Cys-93 and Tyr-157 plays a structural role through stabilizing the Fe(2+) ion, and prevents the production of highly damaging free hydroxyl radicals by holding the oxygen radical via hydroxyl hydrogen. As to expression, highest expression in liver. Also expressed in kidney, lung, brain and small intestine.

The enzyme catalyses L-cysteine + O2 = 3-sulfino-L-alanine + H(+). Its pathway is organosulfur biosynthesis; taurine biosynthesis; hypotaurine from L-cysteine: step 1/2. Functionally, catalyzes the oxidation of cysteine to cysteine sulfinic acid with addition of molecular dioxygen. The protein is Cysteine dioxygenase type 1 (Cdo1) of Mus musculus (Mouse).